The chain runs to 131 residues: Glycine cleavage system H protein (131 aa).

Residues 24-106 (RAIVGVSDHA…YGEGWIMVIE (83 aa)) enclose the Lipoyl-binding domain. Lys65 carries the N6-lipoyllysine modification.

It belongs to the GcvH family. The glycine cleavage system is composed of four proteins: P, T, L and H. (R)-lipoate serves as cofactor.

Functionally, the glycine cleavage system catalyzes the degradation of glycine. The H protein shuttles the methylamine group of glycine from the P protein to the T protein. The chain is Glycine cleavage system H protein from Xylella fastidiosa (strain Temecula1 / ATCC 700964).